We begin with the raw amino-acid sequence, 199 residues long: Charged multivesicular body protein 1b (199 aa).

2 coiled-coil regions span residues 8-42 and 178-199; these read LFNL…AIQK and TSVA…RDQV. The disordered stretch occupies residues 167-199; that stretch reads ELPQGQTGSVGTSVASTEQDELSQRLARLRDQV. Polar residues predominate over residues 170–183; sequence QGQTGSVGTSVAST. Residues 186–196 carry the MIT-interacting motif motif; sequence DELSQRLARLR.

The protein belongs to the SNF7 family. Probable peripherally associated component of the endosomal sorting required for transport complex III (ESCRT-III).

The protein resides in the cytoplasm. Its subcellular location is the cytosol. The protein localises to the endosome. It localises to the late endosome membrane. Probable peripherally associated component of the endosomal sorting required for transport complex III (ESCRT-III) which is involved in multivesicular bodies (MVBs) formation and sorting of endosomal cargo proteins into MVBs. MVBs contain intraluminal vesicles (ILVs) that are generated by invagination and scission from the limiting membrane of the endosome and mostly are delivered to lysosomes enabling degradation of membrane proteins, such as stimulated growth factor receptors, lysosomal enzymes and lipids. The sequence is that of Charged multivesicular body protein 1b (chmp1b) from Xenopus laevis (African clawed frog).